The sequence spans 200 residues: MRLTAKQITWLKVALHLAAFLPLVWLFYAASQGLFRADPAKDIQHFTGRMALKLLLATLLVTPLTRLLKQPLLIRTRRLLGLWCFAWATLHLVSYSLLELGLSNLSLLGSELVSRPYLTLGIVSWLILLALALTSFQAAQRKLGRRWQTLHNFIYLVAILAPIHYLWSVKILSPQPVLYALGAIVLLAWRYKKLRQWWRT.

5 helical membrane passes run 8-28 (ITWL…WLFY), 54-74 (LLLA…PLLI), 79-99 (LLGL…SLLE), 116-136 (PYLT…LTSF), and 153-173 (FIYL…KILS).

Belongs to the MsrQ family. In terms of assembly, heterodimer of a catalytic subunit (MsrP) and a heme-binding subunit (MsrQ). FMN serves as cofactor. Heme b is required as a cofactor.

It localises to the cell inner membrane. Part of the MsrPQ system that repairs oxidized periplasmic proteins containing methionine sulfoxide residues (Met-O), using respiratory chain electrons. Thus protects these proteins from oxidative-stress damage caused by reactive species of oxygen and chlorine generated by the host defense mechanisms. MsrPQ is essential for the maintenance of envelope integrity under bleach stress, rescuing a wide series of structurally unrelated periplasmic proteins from methionine oxidation. MsrQ provides electrons for reduction to the reductase catalytic subunit MsrP, using the quinone pool of the respiratory chain. This chain is Protein-methionine-sulfoxide reductase heme-binding subunit MsrQ, found in Cronobacter sakazakii (strain ATCC BAA-894) (Enterobacter sakazakii).